The following is a 602-amino-acid chain: Cholinesterase (602 aa).

Residues 1–28 (MQSKGTIISIQFLLRFLLLWVLIGKSHT) form the signal peptide. N-linked (GlcNAc...) asparagine glycosylation occurs at Asn85. A disulfide bridge connects residues Cys93 and Cys120. The N-linked (GlcNAc...) asparagine glycan is linked to Asn134. Residue 144 to 145 (GG) participates in substrate binding. Ser226 serves as the catalytic Acyl-ester intermediate. Ser226 is modified (phosphoserine). Residues Asn269 and Asn284 are each glycosylated (N-linked (GlcNAc...) asparagine). An intrachain disulfide couples Cys280 to Cys291. The Charge relay system role is filled by Glu353. Asn369 carries N-linked (GlcNAc...) asparagine glycosylation. A disulfide bond links Cys428 and Cys547. Residue His466 is the Charge relay system of the active site. N-linked (GlcNAc...) asparagine glycosylation is found at Asn483, Asn509, Asn513, and Asn514.

This sequence belongs to the type-B carboxylesterase/lipase family. As to quaternary structure, homotetramer; disulfide-linked. Dimer of dimers.

It localises to the secreted. The catalysed reaction is an acylcholine + H2O = a carboxylate + choline + H(+). Esterase with broad substrate specificity. Contributes to the inactivation of the neurotransmitter acetylcholine. Can degrade neurotoxic organophosphate esters. In Panthera tigris tigris (Bengal tiger), this protein is Cholinesterase (BCHE).